The sequence spans 100 residues: Osteocalcin (100 aa).

The N-terminal stretch at 1–23 (MRALTLLALLALAALCIAGQAGA) is a signal peptide. Residues 24–51 (KPSGAESSKGAAFVSKQEGSEVVKRPRR) constitute a propeptide that is removed on maturation. The Gla domain occupies 52–98 (YLYQWLGAPVPYPDTLEPRREVCELNPDCDELADHIGFQEAYRRFYG). Ca(2+) contacts are provided by Glu-68, Glu-72, Glu-75, and Asp-81. 3 positions are modified to 4-carboxyglutamate: Glu-68, Glu-72, and Glu-75. An intrachain disulfide couples Cys-74 to Cys-80.

This sequence belongs to the osteocalcin/matrix Gla protein family. In terms of processing, gamma-carboxyglutamate residues are formed by vitamin K dependent carboxylation by GGCX. These residues are essential for the binding of calcium. Decarboxylation promotes the hormone activity.

The protein resides in the secreted. Functionally, the carboxylated form is one of the main organic components of the bone matrix, which constitutes 1-2% of the total bone protein: it acts as a negative regulator of bone formation and is required to limit bone formation without impairing bone resorption or mineralization. The carboxylated form binds strongly to apatite and calcium. The uncarboxylated form acts as a hormone secreted by osteoblasts, which regulates different cellular processes, such as energy metabolism, male fertility and brain development. Regulates of energy metabolism by acting as a hormone favoring pancreatic beta-cell proliferation, insulin secretion and sensitivity and energy expenditure. Uncarboxylated osteocalcin hormone also promotes testosterone production in the testes: acts as a ligand for G protein-coupled receptor GPRC6A at the surface of Leydig cells, initiating a signaling response that promotes the expression of enzymes required for testosterone synthesis in a CREB-dependent manner. Also acts as a regulator of brain development: osteocalcin hormone crosses the blood-brain barrier and acts as a ligand for GPR158 on neurons, initiating a signaling response that prevents neuronal apoptosis in the hippocampus, favors the synthesis of all monoamine neurotransmitters and inhibits that of gamma-aminobutyric acid (GABA). Osteocalcin also crosses the placenta during pregnancy and maternal osteocalcin is required for fetal brain development. This chain is Osteocalcin, found in Pan troglodytes (Chimpanzee).